Consider the following 90-residue polypeptide: Small ribosomal subunit protein bS20 (90 aa).

The segment at 1-28 (MPNTSSASKRLRQNEKRRLLNRATRSNM) is disordered.

It belongs to the bacterial ribosomal protein bS20 family.

Its function is as follows. Binds directly to 16S ribosomal RNA. The sequence is that of Small ribosomal subunit protein bS20 from Rhodopirellula baltica (strain DSM 10527 / NCIMB 13988 / SH1).